The primary structure comprises 498 residues: Glycerol kinase (498 aa).

Thr-12 is an ADP binding site. Residues Thr-12, Thr-13, and Ser-14 each contribute to the ATP site. Thr-12 provides a ligand contact to sn-glycerol 3-phosphate. Arg-16 serves as a coordination point for ADP. Arg-82, Tyr-134, and Asp-243 together coordinate sn-glycerol 3-phosphate. 4 residues coordinate glycerol: Arg-82, Tyr-134, Asp-243, and Gln-244. The ADP site is built by Thr-265 and Gly-308. ATP contacts are provided by Thr-265, Gly-308, Gln-312, and Gly-411. Residue Gly-411 coordinates ADP.

The protein belongs to the FGGY kinase family.

The catalysed reaction is glycerol + ATP = sn-glycerol 3-phosphate + ADP + H(+). Its pathway is polyol metabolism; glycerol degradation via glycerol kinase pathway; sn-glycerol 3-phosphate from glycerol: step 1/1. With respect to regulation, inhibited by fructose 1,6-bisphosphate (FBP). Its function is as follows. Key enzyme in the regulation of glycerol uptake and metabolism. Catalyzes the phosphorylation of glycerol to yield sn-glycerol 3-phosphate. The sequence is that of Glycerol kinase from Brucella suis (strain ATCC 23445 / NCTC 10510).